The primary structure comprises 372 residues: Dual-specificity RNA methyltransferase RlmN (372 aa).

The active-site Proton acceptor is Glu92. In terms of domain architecture, Radical SAM core spans 98–337 (ETDRATLCVS…VILRKTRGDD (240 aa)). Cys105 and Cys342 form a disulfide bridge. Cys112, Cys116, and Cys119 together coordinate [4Fe-4S] cluster. Residues 166–167 (GE), Ser198, 220–222 (SLH), and Asn299 each bind S-adenosyl-L-methionine. Cys342 (S-methylcysteine intermediate) is an active-site residue.

This sequence belongs to the radical SAM superfamily. RlmN family. It depends on [4Fe-4S] cluster as a cofactor.

The protein localises to the cytoplasm. The enzyme catalyses adenosine(2503) in 23S rRNA + 2 reduced [2Fe-2S]-[ferredoxin] + 2 S-adenosyl-L-methionine = 2-methyladenosine(2503) in 23S rRNA + 5'-deoxyadenosine + L-methionine + 2 oxidized [2Fe-2S]-[ferredoxin] + S-adenosyl-L-homocysteine. It carries out the reaction adenosine(37) in tRNA + 2 reduced [2Fe-2S]-[ferredoxin] + 2 S-adenosyl-L-methionine = 2-methyladenosine(37) in tRNA + 5'-deoxyadenosine + L-methionine + 2 oxidized [2Fe-2S]-[ferredoxin] + S-adenosyl-L-homocysteine. In terms of biological role, specifically methylates position 2 of adenine 2503 in 23S rRNA and position 2 of adenine 37 in tRNAs. m2A2503 modification seems to play a crucial role in the proofreading step occurring at the peptidyl transferase center and thus would serve to optimize ribosomal fidelity. This Histophilus somni (strain 129Pt) (Haemophilus somnus) protein is Dual-specificity RNA methyltransferase RlmN.